The following is a 490-amino-acid chain: Probable G-protein coupled receptor npr-8 (490 aa).

Residues 1-55 (MEVKDIDNYCDRGISPNASNYLTYPFDGLCLQKFFYQLQTSLRRFTPYEEIIYTT) are Extracellular-facing. Asparagine 17 is a glycosylation site (N-linked (GlcNAc...) asparagine). The helical transmembrane segment at 56 to 76 (VYIIISVAAVIGNGLVIMAVV) threads the bilayer. The Cytoplasmic portion of the chain corresponds to 77-86 (RKKTMRTNRN). The helical transmembrane segment at 87–107 (VLILNLALSNLILAITNIPFL) threads the bilayer. At 108–125 (WLPSIDFEFPYSRFFCKF) the chain is on the extracellular side. Residues 126-146 (ANVLPGSNIYCSTLTISVMAI) form a helical membrane-spanning segment. Over 147–166 (DRYYSVKKLKIASNRKQCFH) the chain is Cytoplasmic. A helical transmembrane segment spans residues 167–187 (AVLVSLAIWIVSFILSLPLLL). Over 188–236 (YYETSMLYVMREIRVVDQSGQEVIRSYGWRQCRLVSAGRLPDITQSIQL) the chain is Extracellular. Residues 237-257 (LMSILQVAFLYIVPLFVLSIF) traverse the membrane as a helical segment. Topologically, residues 258–331 (NVKLTRFLKT…QRTNRTTSLL (74 aa)) are cytoplasmic. Positions 272 to 322 (MSKTRAPPKRFDRSDSHHNSLKNNNNHTSSLRSPSMPSIRSSITERNKTNQ) are disordered. Positions 280 to 289 (KRFDRSDSHH) are enriched in basic and acidic residues. Over residues 292 to 313 (LKNNNNHTSSLRSPSMPSIRSS) the composition is skewed to low complexity. A helical membrane pass occupies residues 332–352 (IAMAGSYAALWFPFTLITFLI). Topologically, residues 353–374 (DFELIINQDYVNLVERIDQTCK) are extracellular. A helical transmembrane segment spans residues 375 to 395 (MVSMLSICVNPFLYGFLNTNF). Over 396 to 490 (RHEFSDIYYR…DDDIEKDSFV (95 aa)) the chain is Cytoplasmic.

Belongs to the G-protein coupled receptor 1 family.

The protein localises to the cell membrane. Not known. Putative receptor. This chain is Probable G-protein coupled receptor npr-8, found in Caenorhabditis elegans.